The primary structure comprises 153 residues: NAD(P)H-quinone oxidoreductase subunit N (153 aa).

It belongs to the complex I NdhN subunit family. NDH-1 can be composed of about 15 different subunits; different subcomplexes with different compositions have been identified which probably have different functions.

The protein localises to the cellular thylakoid membrane. The catalysed reaction is a plastoquinone + NADH + (n+1) H(+)(in) = a plastoquinol + NAD(+) + n H(+)(out). It carries out the reaction a plastoquinone + NADPH + (n+1) H(+)(in) = a plastoquinol + NADP(+) + n H(+)(out). NDH-1 shuttles electrons from an unknown electron donor, via FMN and iron-sulfur (Fe-S) centers, to quinones in the respiratory and/or the photosynthetic chain. The immediate electron acceptor for the enzyme in this species is believed to be plastoquinone. Couples the redox reaction to proton translocation, and thus conserves the redox energy in a proton gradient. Cyanobacterial NDH-1 also plays a role in inorganic carbon-concentration. In Synechococcus sp. (strain CC9605), this protein is NAD(P)H-quinone oxidoreductase subunit N.